The chain runs to 339 residues: Ketol-acid reductoisomerase (NADP(+)) (339 aa).

The region spanning 1–182 (MRVYYDRDAD…GGGRSGIIET (182 aa)) is the KARI N-terminal Rossmann domain. NADP(+) contacts are provided by residues 24 to 27 (YGSQ), Lys-48, Ser-51, Thr-53, and 83 to 86 (DELQ). Residue His-108 is part of the active site. Position 134 (Gly-134) interacts with NADP(+). Residues 183–328 (NFKEECETDL…AKLRGMMPWI (146 aa)) form the KARI C-terminal knotted domain. Residues Asp-191, Glu-195, Glu-227, and Glu-231 each contribute to the Mg(2+) site. Ser-252 contributes to the substrate binding site.

The protein belongs to the ketol-acid reductoisomerase family. Mg(2+) is required as a cofactor.

It carries out the reaction (2R)-2,3-dihydroxy-3-methylbutanoate + NADP(+) = (2S)-2-acetolactate + NADPH + H(+). It catalyses the reaction (2R,3R)-2,3-dihydroxy-3-methylpentanoate + NADP(+) = (S)-2-ethyl-2-hydroxy-3-oxobutanoate + NADPH + H(+). It participates in amino-acid biosynthesis; L-isoleucine biosynthesis; L-isoleucine from 2-oxobutanoate: step 2/4. Its pathway is amino-acid biosynthesis; L-valine biosynthesis; L-valine from pyruvate: step 2/4. Its function is as follows. Involved in the biosynthesis of branched-chain amino acids (BCAA). Catalyzes an alkyl-migration followed by a ketol-acid reduction of (S)-2-acetolactate (S2AL) to yield (R)-2,3-dihydroxy-isovalerate. In the isomerase reaction, S2AL is rearranged via a Mg-dependent methyl migration to produce 3-hydroxy-3-methyl-2-ketobutyrate (HMKB). In the reductase reaction, this 2-ketoacid undergoes a metal-dependent reduction by NADPH to yield (R)-2,3-dihydroxy-isovalerate. The protein is Ketol-acid reductoisomerase (NADP(+)) of Agrobacterium fabrum (strain C58 / ATCC 33970) (Agrobacterium tumefaciens (strain C58)).